The sequence spans 320 residues: Aspartate carbamoyltransferase catalytic subunit (320 aa).

The carbamoyl phosphate site is built by R68 and T69. Position 96 (K96) interacts with L-aspartate. Carbamoyl phosphate-binding residues include R118, H148, and Q151. R181 and R236 together coordinate L-aspartate. Carbamoyl phosphate is bound by residues G277 and P278.

It belongs to the aspartate/ornithine carbamoyltransferase superfamily. ATCase family. In terms of assembly, heterododecamer (2C3:3R2) of six catalytic PyrB chains organized as two trimers (C3), and six regulatory PyrI chains organized as three dimers (R2).

The catalysed reaction is carbamoyl phosphate + L-aspartate = N-carbamoyl-L-aspartate + phosphate + H(+). It participates in pyrimidine metabolism; UMP biosynthesis via de novo pathway; (S)-dihydroorotate from bicarbonate: step 2/3. Catalyzes the condensation of carbamoyl phosphate and aspartate to form carbamoyl aspartate and inorganic phosphate, the committed step in the de novo pyrimidine nucleotide biosynthesis pathway. This Variovorax paradoxus (strain S110) protein is Aspartate carbamoyltransferase catalytic subunit.